The following is a 159-amino-acid chain: Ribosomal RNA large subunit methyltransferase H (159 aa).

Residues leucine 76, glycine 107, and leucine 126 to methionine 131 contribute to the S-adenosyl-L-methionine site.

This sequence belongs to the RNA methyltransferase RlmH family. As to quaternary structure, homodimer.

It is found in the cytoplasm. It catalyses the reaction pseudouridine(1915) in 23S rRNA + S-adenosyl-L-methionine = N(3)-methylpseudouridine(1915) in 23S rRNA + S-adenosyl-L-homocysteine + H(+). Functionally, specifically methylates the pseudouridine at position 1915 (m3Psi1915) in 23S rRNA. This chain is Ribosomal RNA large subunit methyltransferase H, found in Acinetobacter baylyi (strain ATCC 33305 / BD413 / ADP1).